Consider the following 817-residue polypeptide: Rho GTPase-activating protein gacII (817 aa).

One can recognise a Rho-GAP domain in the interval 20–204 (TTIVKIGTPK…TLIEEFQYIS (185 aa)). The SH3 domain maps to 238–298 (EDYLIAKANT…SQTYVDIIDI (61 aa)). Residues 318–339 (ASTILHTPPTSSSSSSSSSSSS) are compositionally biased toward low complexity. Disordered stretches follow at residues 318 to 638 (ASTI…NIPV), 691 to 771 (LGGQ…QQQQ), and 783 to 817 (LPPQ…FNKN). The segment covering 340-358 (ILLTDNQPKLCSSTPRINN) has biased composition (polar residues). Residues 359–391 (SPSSFSPSLSSTTPQLLVQQSPRQSPRQIPSIS) are compositionally biased toward low complexity. The segment covering 396-438 (PNNTNQPSFGHGTLQRTSTGYFSSKPLSISQPINMSKPTNMSP) has biased composition (polar residues). A compositionally biased stretch (pro residues) spans 461–471 (PPLPTKPPPLT). The span at 472–498 (IPSSSSLPTTPIKQQPQQPIQQPLTPQ) shows a compositional bias: low complexity. A compositionally biased stretch (polar residues) spans 509–532 (LSSSVNTANTGNCANILSPNSDRY). Composition is skewed to low complexity over residues 534–568 (SSRS…SSTS), 577–587 (KSKSSKNSPSK), and 607–624 (ITTT…TIAT). Pro residues predominate over residues 625-635 (TPPPPSKPLPN). Residues 705–722 (KSQSSYLDNNNLPSRNTN) are compositionally biased toward polar residues. Residues 725 to 734 (NLPPRPPPLN) show a composition bias toward pro residues. Low complexity-rich tracts occupy residues 735–744 (IPQQQQQYKP) and 752–771 (QSPQ…QQQQ). A compositionally biased stretch (polar residues) spans 785–803 (PQNTNLSGKNLQRSSTSML). Positions 807–817 (LPPPPFSFNKN) are enriched in pro residues.

It localises to the cytoplasm. Its function is as follows. Rho GTPase-activating protein involved in the signal transduction pathway. The protein is Rho GTPase-activating protein gacII (gacII) of Dictyostelium discoideum (Social amoeba).